A 72-amino-acid chain; its full sequence is Large ribosomal subunit protein uL29 (72 aa).

It belongs to the universal ribosomal protein uL29 family.

The protein is Large ribosomal subunit protein uL29 of Chlamydia felis (strain Fe/C-56) (Chlamydophila felis).